We begin with the raw amino-acid sequence, 909 residues long: E3 ubiquitin-protein ligase HACE1 (909 aa).

The N-terminal helix important for homodimerization stretch occupies residues 1–21 (MERAMEQLNRLTRSLRRARTV). ANK repeat units follow at residues 23-55 (LPEDNETAVYTLMPMVMADQHRSVSELLSNSKF), 64-93 (VKRSLLHIAANCGSVECLVLLLKKGANPNY), 97-126 (SGCTPLHLAARNGQKKCMSKLLEYSADVNI), 130-159 (EGLTAIHWLAVNGRTELLHDLVQHVSDVDV), 163-192 (MGQTALHVACQNGHKTTVQCLLDSGADINR), 196-226 (SGATPLYFACSHGQRDTAQILLLRGAKYLPD), and 228-253 (NGVTPLDLCVQGGYGETCEVLIQYHP). Residues 398–433 (QDQDAASIPPFEPPGPGSYENLSTGTRESKPDALAG) are disordered. An HECT domain is found at 574–909 (NCAKLKQGIA…HCGSYGYTMA (336 aa)). C876 acts as the Glycyl thioester intermediate in catalysis.

In terms of assembly, homodimer. The homodimer is autoinhibited and stabilized by its N-terminal helix. Interacts with RAB1 (RAB1A, RAB1B or RAB1C), RAB4 (RAB4A or RAB4B) and RAB11 (RAB11A or RAB11B); in a GTP-dependent manner. Interacts with the 26S proteasomal complex through the 20S core proteasomal subunit. Interacts with RARB. Post-translationally, autoubiquitinated. Expressed in multiple tissues including heart, brain and kidney.

It localises to the golgi apparatus. It is found in the golgi stack membrane. The protein resides in the cytoplasm. The protein localises to the endoplasmic reticulum. It carries out the reaction S-ubiquitinyl-[E2 ubiquitin-conjugating enzyme]-L-cysteine + [acceptor protein]-L-lysine = [E2 ubiquitin-conjugating enzyme]-L-cysteine + N(6)-ubiquitinyl-[acceptor protein]-L-lysine.. It participates in protein modification; protein ubiquitination. Sterically autoinhibited in its dimeric state. E3 ubiquitin-protein ligase involved in Golgi membrane fusion and regulation of small GTPases. Acts as a regulator of Golgi membrane dynamics during the cell cycle: recruited to Golgi membrane by Rab proteins and regulates postmitotic Golgi membrane fusion. Acts by mediating ubiquitination during mitotic Golgi disassembly, ubiquitination serving as a signal for Golgi reassembly later, after cell division. Specifically binds GTP-bound RAC1, mediating ubiquitination and subsequent degradation of active RAC1, thereby playing a role in host defense against pathogens. May also act as a transcription regulator via its interaction with RARB. This chain is E3 ubiquitin-protein ligase HACE1 (HACE1), found in Homo sapiens (Human).